Consider the following 346-residue polypeptide: Uroporphyrinogen decarboxylase (346 aa).

Substrate-binding positions include 26–30 (RQAGR), D76, Y153, S208, and H323.

Belongs to the uroporphyrinogen decarboxylase family. Homodimer.

It is found in the cytoplasm. It catalyses the reaction uroporphyrinogen III + 4 H(+) = coproporphyrinogen III + 4 CO2. It functions in the pathway porphyrin-containing compound metabolism; protoporphyrin-IX biosynthesis; coproporphyrinogen-III from 5-aminolevulinate: step 4/4. Functionally, catalyzes the decarboxylation of four acetate groups of uroporphyrinogen-III to yield coproporphyrinogen-III. The protein is Uroporphyrinogen decarboxylase of Prochlorococcus marinus (strain AS9601).